The chain runs to 254 residues: 5'-nucleotidase SurE (254 aa).

Positions 8, 9, 38, and 91 each coordinate a divalent metal cation.

The protein belongs to the SurE nucleotidase family. A divalent metal cation serves as cofactor.

Its subcellular location is the cytoplasm. The enzyme catalyses a ribonucleoside 5'-phosphate + H2O = a ribonucleoside + phosphate. Functionally, nucleotidase that shows phosphatase activity on nucleoside 5'-monophosphates. This chain is 5'-nucleotidase SurE, found in Anaeromyxobacter sp. (strain Fw109-5).